Consider the following 348-residue polypeptide: D-erythrose-4-phosphate dehydrogenase (348 aa).

Residues 12–13 and Arg81 contribute to the NAD(+) site; that span reads RI. Substrate-binding positions include 154-156, Arg200, 213-214, and Arg236; these read SCT and TK. Cys155 serves as the catalytic Nucleophile. Asn318 is an NAD(+) binding site.

It belongs to the glyceraldehyde-3-phosphate dehydrogenase family. Epd subfamily. Homotetramer.

Its subcellular location is the cytoplasm. The enzyme catalyses D-erythrose 4-phosphate + NAD(+) + H2O = 4-phospho-D-erythronate + NADH + 2 H(+). It participates in cofactor biosynthesis; pyridoxine 5'-phosphate biosynthesis; pyridoxine 5'-phosphate from D-erythrose 4-phosphate: step 1/5. Functionally, catalyzes the NAD-dependent conversion of D-erythrose 4-phosphate to 4-phosphoerythronate. This is D-erythrose-4-phosphate dehydrogenase from Salmonella dublin (strain CT_02021853).